We begin with the raw amino-acid sequence, 1392 residues long: DNA-directed RNA polymerase subunit beta (1392 aa).

It belongs to the RNA polymerase beta chain family. As to quaternary structure, the RNAP catalytic core consists of 2 alpha, 1 beta, 1 beta' and 1 omega subunit. When a sigma factor is associated with the core the holoenzyme is formed, which can initiate transcription.

It carries out the reaction RNA(n) + a ribonucleoside 5'-triphosphate = RNA(n+1) + diphosphate. In terms of biological role, DNA-dependent RNA polymerase catalyzes the transcription of DNA into RNA using the four ribonucleoside triphosphates as substrates. The polypeptide is DNA-directed RNA polymerase subunit beta (Neisseria meningitidis serogroup B (strain ATCC BAA-335 / MC58)).